Here is a 696-residue protein sequence, read N- to C-terminus: Polyribonucleotide nucleotidyltransferase (696 aa).

Mg(2+)-binding residues include Asp483 and Asp489. In terms of domain architecture, KH spans Pro550–Ile609. The 69-residue stretch at Gly619–Lys687 folds into the S1 motif domain.

This sequence belongs to the polyribonucleotide nucleotidyltransferase family. It depends on Mg(2+) as a cofactor.

Its subcellular location is the cytoplasm. It catalyses the reaction RNA(n+1) + phosphate = RNA(n) + a ribonucleoside 5'-diphosphate. Functionally, involved in mRNA degradation. Catalyzes the phosphorolysis of single-stranded polyribonucleotides processively in the 3'- to 5'-direction. This chain is Polyribonucleotide nucleotidyltransferase, found in Geotalea uraniireducens (strain Rf4) (Geobacter uraniireducens).